The chain runs to 225 residues: Histone H3-like centromeric protein cid (225 aa).

Positions 1 to 11 are enriched in basic residues; that stretch reads MPRHSRAKRAP. Residues 1–131 are disordered; that stretch reads MPRHSRAKRA…KAANPMSRAK (131 aa). Positions 43 to 52 are enriched in polar residues; it reads FTTSQLTLQD. Serine 74 and serine 75 each carry phosphoserine. Threonine 76 carries the phosphothreonine modification. Serine 77 carries the post-translational modification Phosphoserine. Over residues 86–103 the composition is skewed to polar residues; the sequence is RYPTTRSPQTRRMTVQQE. The interval 133 to 225 is H3-like; that stretch reads MDREIRRLQH…AYICDRGRQF (93 aa).

This sequence belongs to the histone H3 family. In terms of assembly, forms a nucleosome-like histone octamer containing two molecules each of H2A, H2B, cid and H4 assembled in one cid-H4 heterotetramer and two H2A-H2B heterodimers. The cid-H4 heterotetramer is more compact and structurally more rigid than corresponding H3-H4 heterotetramers. Interacts with the condensin subunit Cap-G. Interacts with Chrac-14.

The protein resides in the nucleus. It localises to the chromosome. It is found in the centromere. The protein localises to the kinetochore. Functionally, histone H3-like variant which exclusively replaces conventional H3 in the nucleosome core of centromeric chromatin at the inner plate of the kinetochore. Required for recruitment and assembly of kinetochore proteins, mitotic progression and chromosome segregation. May serve as an epigenetic mark that propagates centromere identity through replication and cell division. The chain is Histone H3-like centromeric protein cid from Drosophila melanogaster (Fruit fly).